The sequence spans 590 residues: Kinetochore protein ndc-80 (590 aa).

Coiled-coil stretches lie at residues 269–342 (KGNE…KQIH) and 450–525 (ELET…MKLD).

This sequence belongs to the NDC80/HEC1 family. As to quaternary structure, component of the NDC80 complex, which is composed of at least ndc-80 and him-10. The NDC80 complex interacts with knl-1. Interacts with the RZZ complex components rod-1 (via N-terminus) and zwl-1.

The protein resides in the nucleus. It is found in the chromosome. It localises to the centromere. The protein localises to the kinetochore. Its subcellular location is the cytoplasm. The protein resides in the cytoskeleton. Its function is as follows. Acts as a component of the essential kinetochore-associated ndc-80 complex, which is required for chromosome segregation in mitosis and meiosis and spindle checkpoint activity. Plays a role in kinetochore assembly and recruits the checkpoint protein mdf-2 and the spindly-like protein spdl-1 to unattached kinetochores. Mediates the formation of end-on kinetochore-microtubule attachments through recruitment of spdl-1. The ndc-80 complex synergistically enhances the affinity of the ska-1 complex for microtubules and may allow the ndc-80 complex to track depolymerizing microtubules. The sequence is that of Kinetochore protein ndc-80 (ndc-80) from Caenorhabditis elegans.